Here is a 265-residue protein sequence, read N- to C-terminus: Uridylate kinase (265 aa).

Residues 1–29 are disordered; it reads MTESREPHVAGSAAPRPEPANGLASGQPS. 40–43 is a binding site for ATP; it reads KLGG. Gly-81 contributes to the UMP binding site. ATP is bound by residues Gly-82 and Arg-86. UMP is bound by residues Asp-101 and 162 to 169; that span reads MGLPYFST. ATP is bound by residues Phe-195 and Asp-198.

This sequence belongs to the UMP kinase family. As to quaternary structure, homohexamer.

It is found in the cytoplasm. It carries out the reaction UMP + ATP = UDP + ADP. It participates in pyrimidine metabolism; CTP biosynthesis via de novo pathway; UDP from UMP (UMPK route): step 1/1. Its activity is regulated as follows. Inhibited by UTP. Its function is as follows. Catalyzes the reversible phosphorylation of UMP to UDP. This chain is Uridylate kinase, found in Mycobacterium avium (strain 104).